The following is a 240-amino-acid chain: DNA repair protein RecO (240 aa).

It belongs to the RecO family.

Functionally, involved in DNA repair and RecF pathway recombination. This is DNA repair protein RecO from Pseudoalteromonas atlantica (strain T6c / ATCC BAA-1087).